The primary structure comprises 362 residues: Cytoskeleton protein RodZ (362 aa).

The Cytoplasmic segment spans residues Met1–Gly111. In terms of domain architecture, HTH cro/C1-type spans Leu19 to Leu79. A DNA-binding region (H-T-H motif) is located at residues Gln30 to Glu49. A helical; Signal-anchor for type II membrane protein transmembrane segment spans residues Trp112–Trp132. The Periplasmic portion of the chain corresponds to Trp133 to Glu362. The segment at Ser151–Gly277 is disordered. The segment covering Ser193–Thr221 has biased composition (low complexity). Over residues Val223–His242 the composition is skewed to polar residues. Residues Ala246–Pro259 show a composition bias toward low complexity.

The protein belongs to the RodZ family.

Its subcellular location is the cell inner membrane. In terms of biological role, cytoskeletal protein that is involved in cell-shape control through regulation of the length of the long axis. In Yersinia pseudotuberculosis serotype IB (strain PB1/+), this protein is Cytoskeleton protein RodZ.